The sequence spans 872 residues: MSILTRWLLIPPVNARLIGRYRDYRRHGASAFSATLGCFWMILAWIFIPLEHPRWQRIRAEHKNLYPHINASRPRPLDPVRYLIQTCWLLIGASRKETPKPRRRAFSGLQNIRGRYHQWMNELPERVSHKTQHLDEKKELGHLSAGARRLILGIIVTFSLILALICVTQPFNPLAQFIFLMLLWGGALIVRRMPGRFSALMLIVLSLTVSCRYIWWRYTSTLNWDDPVSLVCGLILLFAETYAWIVLVLGYFQVVWPLNRQPVPLPKDMSLWPSVDIFVPTYNEDLNVVKNTIYASLGIDWPKDKLNIWILDDGGREEFRQFAQNVGVKYIARTTHEHAKAGNINNALKYAKGEFVSIFDCDHVPTRSFLQMTVGWFLKEKQLAMMQTPHHFFSPDPFERNLGRFRKTPNEGTLFYGLVQDGNDMWDATFFCGSCAVIRRKPLDEIGGIAVETVTEDAHTSLRLHRRGYTSAYMRIPQAAGLATESLSAHIGQRIRWARGMVQIFRLDNPLTGKGLKFAQRLCYVNAMFHFLSGIPRLIFLTAPLAFLLLHAYIIYAPALMIALFVLPHMIHASLTNSKIQGKYRHSFWSEIYETVLAWYIAPPTLVALINPHKGKFNVTAKGGLVEEEYVDWVISRPYIFLVLLNLVGVAVGIWRYFYGPPTEMLTVVVSMVWVFYNLIVLGGAVAVSVESKQVRRSHRVEMTMPAAIAREDGHLFSCTVQDFSDGGLGIKINGQAQILEGQKVNLLLKRGQQEYVFPTQVARVMGNEVGLKLMPLTTQQHIDFVQCTFARADTWALWQDSYPEDKPLESLLDILKLGFRGYRHLAEFAPSSVKGIFRVLTSLVSWVVSFIPRRPERSETAQPSDQALAQQ.

A run of 4 helical transmembrane segments spans residues 30 to 50 (SAFSATLGCFWMILAWIFIPL), 151 to 171 (ILGIIVTFSLILALICVTQPF), 173 to 193 (PLAQFIFLMLLWGGALIVRRM), and 230 to 250 (LVCGLILLFAETYAWIVLVLG). The tract at residues 271 to 364 (LWPSVDIFVP…FVSIFDCDHV (94 aa)) is catalytic subdomain A. Asp313 is a catalytic residue. Asp360 and Asp362 together coordinate substrate. The interval 441–501 (KPLDEIGGIA…GQRIRWARGM (61 aa)) is catalytic subdomain B. The active site involves Asp457. Transmembrane regions (helical) follow at residues 525–545 (VNAMFHFLSGIPRLIFLTAPL), 547–567 (FLLLHAYIIYAPALMIALFVL), 592–612 (IYETVLAWYIAPPTLVALINP), 640–660 (IFLVLLNLVGVAVGIWRYFYG), and 668–688 (VVVSMVWVFYNLIVLGGAVAV). The 97-residue stretch at 694 to 790 (QVRRSHRVEM…QHIDFVQCTF (97 aa)) folds into the PilZ domain. A helical transmembrane segment spans residues 833 to 853 (SVKGIFRVLTSLVSWVVSFIP).

It belongs to the glycosyltransferase 2 family. Mg(2+) is required as a cofactor.

It is found in the cell inner membrane. The catalysed reaction is [(1-&gt;4)-beta-D-glucosyl](n) + UDP-alpha-D-glucose = [(1-&gt;4)-beta-D-glucosyl](n+1) + UDP + H(+). Its pathway is glycan metabolism; bacterial cellulose biosynthesis. Activated by bis-(3'-5') cyclic diguanylic acid (c-di-GMP). In terms of biological role, catalytic subunit of cellulose synthase. It polymerizes uridine 5'-diphosphate glucose to cellulose, which is produced as an extracellular component for mechanical and chemical protection at the onset of the stationary phase, when the cells exhibit multicellular behavior (rdar morphotype). Coexpression of cellulose and thin aggregative fimbriae leads to a hydrophobic network with tightly packed cells embedded in a highly inert matrix. In Escherichia coli O157:H7, this protein is Cellulose synthase catalytic subunit [UDP-forming] (bcsA).